A 159-amino-acid polypeptide reads, in one-letter code: Phosphopantetheine adenylyltransferase (159 aa).

Substrate is bound at residue threonine 10. ATP is bound by residues 10–11 and histidine 18; that span reads TF. Residues lysine 42, leucine 74, and arginine 88 each contribute to the substrate site. ATP-binding positions include 89–91, glutamate 99, and 124–130; these read GLR and YSFISSS.

This sequence belongs to the bacterial CoaD family. As to quaternary structure, homohexamer. The cofactor is Mg(2+).

The protein resides in the cytoplasm. It carries out the reaction (R)-4'-phosphopantetheine + ATP + H(+) = 3'-dephospho-CoA + diphosphate. Its pathway is cofactor biosynthesis; coenzyme A biosynthesis; CoA from (R)-pantothenate: step 4/5. In terms of biological role, reversibly transfers an adenylyl group from ATP to 4'-phosphopantetheine, yielding dephospho-CoA (dPCoA) and pyrophosphate. This is Phosphopantetheine adenylyltransferase from Campylobacter hominis (strain ATCC BAA-381 / DSM 21671 / CCUG 45161 / LMG 19568 / NCTC 13146 / CH001A).